Consider the following 675-residue polypeptide: DNA ligase (675 aa).

NAD(+)-binding positions include 33-37 (DAEYD), 82-83 (SL), and E115. Catalysis depends on K117, which acts as the N6-AMP-lysine intermediate. Residues R138, E175, K293, and K317 each coordinate NAD(+). Zn(2+) contacts are provided by C411, C414, C429, and C435. The BRCT domain occupies 594 to 675 (IADNPLKDKT…LIGYFTTIVS (82 aa)).

The protein belongs to the NAD-dependent DNA ligase family. LigA subfamily. Mg(2+) serves as cofactor. Requires Mn(2+) as cofactor.

It carries out the reaction NAD(+) + (deoxyribonucleotide)n-3'-hydroxyl + 5'-phospho-(deoxyribonucleotide)m = (deoxyribonucleotide)n+m + AMP + beta-nicotinamide D-nucleotide.. Functionally, DNA ligase that catalyzes the formation of phosphodiester linkages between 5'-phosphoryl and 3'-hydroxyl groups in double-stranded DNA using NAD as a coenzyme and as the energy source for the reaction. It is essential for DNA replication and repair of damaged DNA. The polypeptide is DNA ligase (Glaesserella parasuis serovar 5 (strain SH0165) (Haemophilus parasuis)).